The primary structure comprises 138 residues: CLAVATA3/ESR (CLE)-related protein 2 (138 aa).

The first 22 residues, 1 to 22 (MPNIFKILLIVLLAVVSFRLSA), serve as a signal peptide directing secretion. The interval 23–90 (STGDKKTAND…VPSHVTNRSM (68 aa)) is required for secretion from the host cytoplasm to the host apoplasm. Residues N37, N87, and N123 are each glycosylated (N-linked (GlcNAc...) asparagine). 2 disordered regions span residues 66–97 (AIGR…PPPV) and 116–138 (LAEK…PHHH). Residues 127–138 (RLSPSGPDPHHH) carry the CLE motif.

Belongs to the CLV3/ESR signal peptide family. In terms of tissue distribution, highly expressed exclusively within the dorsal esophageal gland cell during syncytium formation in host plants (at protein level).

It is found in the secreted. The protein resides in the host cytoplasm. The protein localises to the host extracellular space. Its subcellular location is the extracellular space. It localises to the apoplast. Its function is as follows. Mimics host plant CLE extracellular signal peptides that regulate cell fate. May play a role in the differentiation or division of feeding cells (syncytia) induced in plant roots during infection. The polypeptide is CLAVATA3/ESR (CLE)-related protein 2 (CLE2) (Heterodera glycines (Soybean cyst nematode worm)).